Consider the following 276-residue polypeptide: Pantothenate synthetase (276 aa).

27–34 provides a ligand contact to ATP; sequence MGALHKGH. His-34 serves as the catalytic Proton donor. Gln-58 provides a ligand contact to (R)-pantoate. Position 58 (Gln-58) interacts with beta-alanine. Residue 147 to 150 coordinates ATP; it reads GKKD. Residue Gln-153 participates in (R)-pantoate binding. Residues Val-176 and 184–187 each bind ATP; that span reads LSSR.

This sequence belongs to the pantothenate synthetase family. In terms of assembly, homodimer.

The protein resides in the cytoplasm. The catalysed reaction is (R)-pantoate + beta-alanine + ATP = (R)-pantothenate + AMP + diphosphate + H(+). It participates in cofactor biosynthesis; (R)-pantothenate biosynthesis; (R)-pantothenate from (R)-pantoate and beta-alanine: step 1/1. In terms of biological role, catalyzes the condensation of pantoate with beta-alanine in an ATP-dependent reaction via a pantoyl-adenylate intermediate. In Helicobacter acinonychis (strain Sheeba), this protein is Pantothenate synthetase.